A 323-amino-acid polypeptide reads, in one-letter code: MEDAPAFYGFKNIFLTMFATFFFFKLLIKVFLALLTHFYIVKGNRKEAARIAEEIYGGLSDCWADRSPLHEAAAQGRLLALKTLIAQGINVNLVTINRVSSLHEACLGGHVACAKALLENGAHVNAQTVHGATPLFNACCSGSAACVNVLLEFGAKAQLEIYLASPIHEAVKRGHRECMEILLTKDVNIEQEVPQLGTPLYVACTYQRVDCVKKLLELGASVDHGQWLDTPLHAAVRQSSVEVINLLTVYGANLNLRNAQGKSALDLAVPKSSVRQALLLHEGPPALSQLCRLCVRKCLGRTCHHAIYALGLPESLEKFLLYQ.

ANK repeat units follow at residues 64–93, 97–126, 130–159, 162–191, 195–224, 227–256, and 260–289; these read ADRS…NVNL, NRVS…HVNA, HGAT…KAQL, YLAS…NIEQ, QLGT…SVDH, WLDT…NLNL, and QGKS…ALSQ. One can recognise an SOCS box domain in the interval 273-323; it reads SVRQALLLHEGPPALSQLCRLCVRKCLGRTCHHAIYALGLPESLEKFLLYQ.

Belongs to the ankyrin SOCS box (ASB) family. In terms of assembly, substrate-recognition component of the ECS(ASB11) complex, composed of ASB11, CUL5, ELOB, ELOC and RNF7/RBX2.

It is found in the endoplasmic reticulum. The protein operates within protein modification; protein ubiquitination. Functionally, substrate-recognition component of a cullin-5-RING E3 ubiquitin-protein ligase complex (ECS complex, also named CRL5 complex), which mediates the ubiquitination and subsequent proteasomal degradation of target proteins, such as BIK, DIRAS2 and RPN1. The ECS(ASB11) complex acts as a regulator of the endoplasmic reticulum unfolded protein response by mediating ubiquitination and degradation of BIK. This chain is Ankyrin repeat and SOCS box protein 11 (Asb11), found in Mus musculus (Mouse).